A 261-amino-acid polypeptide reads, in one-letter code: Glucose 1-dehydrogenase (261 aa).

11–35 (AITGAASGLGKAMAIRFGKEQAKVV) lines the NADP(+) pocket. Ser145 is a substrate binding site. Tyr158 functions as the Proton acceptor in the catalytic mechanism.

It belongs to the short-chain dehydrogenases/reductases (SDR) family. In terms of assembly, homotetramer.

The catalysed reaction is D-glucose + NAD(+) = D-glucono-1,5-lactone + NADH + H(+). The enzyme catalyses D-glucose + NADP(+) = D-glucono-1,5-lactone + NADPH + H(+). In Bacillus subtilis (strain 168), this protein is Glucose 1-dehydrogenase (gdh).